Consider the following 251-residue polypeptide: RNA polymerase sigma factor SigI (251 aa).

Positions 61-74 (DEFSIGLIAFNEAI) match the Polymerase core binding motif. The H-T-H motif DNA-binding region spans 206 to 225 (VKQLEQLVSVSRKTIERNRK).

The protein belongs to the sigma-70 factor family. SigI subfamily. Interacts with RsgI.

The protein localises to the cytoplasm. Negatively regulated by the anti-sigma-I factor RsgI. Upon exposure to heat, SigI is released from RsgI and activated. Transient heat activation of SigI may depend upon DnaK chaperone. In terms of biological role, sigma factors are initiation factors that promote the attachment of RNA polymerase to specific initiation sites and are then released. This sigma factor is involved in regulation of cell wall metabolism in response to heat stress. Acts by regulating the expression of genes such as bcrC, mreBH and lytE. Also plays a role in survival at low temperatures. The chain is RNA polymerase sigma factor SigI from Bacillus subtilis (strain 168).